A 611-amino-acid chain; its full sequence is Autophagy-related protein 22-2 (611 aa).

The segment at 1 to 24 is disordered; the sequence is MRADDNPSARSLHAQFPGDDTRPT. Residues 35-55 traverse the membrane as a helical segment; sequence YGWAAEVFTVCAMGSFLPITL. An N-linked (GlcNAc...) asparagine glycan is attached at Asn-78. Helical transmembrane passes span 116-136, 151-171, and 175-195; these read TASF…VLII, LLVA…SVVP, and IVGA…FVLL. The N-linked (GlcNAc...) asparagine glycan is linked to Asn-221. 2 helical membrane-spanning segments follow: residues 286–306 and 316–336; these read IGIG…VIIA and LVLF…ALWL. The N-linked (GlcNAc...) asparagine glycan is linked to Asn-353. 6 helical membrane-spanning segments follow: residues 380-400, 414-434, 449-469, 483-503, 521-541, and 551-571; these read ILLF…VSGT, AALG…AFSW, IIAC…GFVP, WEMF…SSYC, ALYA…VGLI, and AFVF…LVDV.

The protein belongs to the ATG22 family.

It is found in the vacuole membrane. Vacuolar effluxer which mediate the efflux of amino acids resulting from autophagic degradation. The release of autophagic amino acids allows the maintenance of protein synthesis and viability during nitrogen starvation. The protein is Autophagy-related protein 22-2 (atg22-2) of Aspergillus clavatus (strain ATCC 1007 / CBS 513.65 / DSM 816 / NCTC 3887 / NRRL 1 / QM 1276 / 107).